The chain runs to 288 residues: Phosphate import ATP-binding protein PstB (288 aa).

The 242-residue stretch at 42-283 folds into the ABC transporter domain; the sequence is IRDLNFYYEN…PKEKKTRDYI (242 aa). An ATP-binding site is contributed by 74 to 81; that stretch reads GPSGCGKS.

The protein belongs to the ABC transporter superfamily. Phosphate importer (TC 3.A.1.7) family. As to quaternary structure, the complex is composed of two ATP-binding proteins (PstB), two transmembrane proteins (PstC and PstA) and a solute-binding protein (PstS).

The protein localises to the cell membrane. The catalysed reaction is phosphate(out) + ATP + H2O = ADP + 2 phosphate(in) + H(+). Its function is as follows. Part of the ABC transporter complex PstSACB involved in phosphate import. Responsible for energy coupling to the transport system. This chain is Phosphate import ATP-binding protein PstB, found in Malacoplasma penetrans (strain HF-2) (Mycoplasma penetrans).